A 211-amino-acid chain; its full sequence is Thymidylate kinase (211 aa).

10–17 (GPDGAGKT) serves as a coordination point for ATP.

The protein belongs to the thymidylate kinase family.

The enzyme catalyses dTMP + ATP = dTDP + ADP. Functionally, phosphorylation of dTMP to form dTDP in both de novo and salvage pathways of dTTP synthesis. The sequence is that of Thymidylate kinase from Lactococcus lactis subsp. cremoris (strain MG1363).